The primary structure comprises 131 residues: Small ribosomal subunit protein eS6 (131 aa).

The segment at 76–95 (APPGFKPKRKGERRRKTVRG) is disordered. Positions 81-93 (KPKRKGERRRKTV) are enriched in basic residues.

The protein belongs to the eukaryotic ribosomal protein eS6 family.

In Methanocaldococcus jannaschii (strain ATCC 43067 / DSM 2661 / JAL-1 / JCM 10045 / NBRC 100440) (Methanococcus jannaschii), this protein is Small ribosomal subunit protein eS6.